A 203-amino-acid chain; its full sequence is Recombination protein RecR (203 aa).

A C4-type zinc finger spans residues 56–71 (CSVCGNVSDEERCRIC). Residues 79–179 (SLVCVVEEPK…TVTRIASGLP (101 aa)) enclose the Toprim domain.

This sequence belongs to the RecR family.

Functionally, may play a role in DNA repair. It seems to be involved in an RecBC-independent recombinational process of DNA repair. It may act with RecF and RecO. The protein is Recombination protein RecR of Mycolicibacterium smegmatis (strain ATCC 700084 / mc(2)155) (Mycobacterium smegmatis).